Consider the following 137-residue polypeptide: MRLRVVAVGRPRLAYARLGVEEYARRMRRYAPLDLVFVRKGEELLPKAEGHRKVVLDERGRLLTTEELYRRLLVWEGERVAFLVGGAEGHPEAVREEADLLLSLSPLTLQHELALLVLMEQLYRVLTLRAGHPYHRP.

S-adenosyl-L-methionine contacts are provided by residues Leu56, Gly85, and 104–109 (LSPLTL).

Belongs to the RNA methyltransferase RlmH family. As to quaternary structure, homodimer.

It is found in the cytoplasm. The catalysed reaction is pseudouridine(1915) in 23S rRNA + S-adenosyl-L-methionine = N(3)-methylpseudouridine(1915) in 23S rRNA + S-adenosyl-L-homocysteine + H(+). Functionally, specifically methylates the pseudouridine at position 1915 (m3Psi1915) in 23S rRNA. The sequence is that of Ribosomal RNA large subunit methyltransferase H from Thermus thermophilus (strain ATCC BAA-163 / DSM 7039 / HB27).